Reading from the N-terminus, the 262-residue chain is Ribosomal RNA small subunit methyltransferase A (262 aa).

6 residues coordinate S-adenosyl-L-methionine: Asn-13, Leu-15, Gly-40, Glu-61, Asp-85, and Asn-105.

The protein belongs to the class I-like SAM-binding methyltransferase superfamily. rRNA adenine N(6)-methyltransferase family. RsmA subfamily.

Its subcellular location is the cytoplasm. It carries out the reaction adenosine(1518)/adenosine(1519) in 16S rRNA + 4 S-adenosyl-L-methionine = N(6)-dimethyladenosine(1518)/N(6)-dimethyladenosine(1519) in 16S rRNA + 4 S-adenosyl-L-homocysteine + 4 H(+). Its function is as follows. Specifically dimethylates two adjacent adenosines (A1518 and A1519) in the loop of a conserved hairpin near the 3'-end of 16S rRNA in the 30S particle. May play a critical role in biogenesis of 30S subunits. This Laribacter hongkongensis (strain HLHK9) protein is Ribosomal RNA small subunit methyltransferase A.